A 274-amino-acid chain; its full sequence is 2,3,4,5-tetrahydropyridine-2,6-dicarboxylate N-succinyltransferase (274 aa).

Belongs to the transferase hexapeptide repeat family.

The protein localises to the cytoplasm. The enzyme catalyses (S)-2,3,4,5-tetrahydrodipicolinate + succinyl-CoA + H2O = (S)-2-succinylamino-6-oxoheptanedioate + CoA. It participates in amino-acid biosynthesis; L-lysine biosynthesis via DAP pathway; LL-2,6-diaminopimelate from (S)-tetrahydrodipicolinate (succinylase route): step 1/3. In Erwinia tasmaniensis (strain DSM 17950 / CFBP 7177 / CIP 109463 / NCPPB 4357 / Et1/99), this protein is 2,3,4,5-tetrahydropyridine-2,6-dicarboxylate N-succinyltransferase.